The sequence spans 210 residues: Small ribosomal subunit protein eS8y (210 aa).

The interval Met1–Arg22 is disordered. Positions Ile8 to Arg22 are enriched in basic residues.

Belongs to the eukaryotic ribosomal protein eS8 family.

This Arabidopsis thaliana (Mouse-ear cress) protein is Small ribosomal subunit protein eS8y (RPS8B).